Here is a 106-residue protein sequence, read N- to C-terminus: Acylphosphatase-2 (106 aa).

One can recognise an Acylphosphatase-like domain in the interval 16 to 106 (SVDYEVFGTV…LEYSDFSIRY (91 aa)). Active-site residues include Arg-31 and Asn-49. Ser-100 is subject to Phosphoserine.

Belongs to the acylphosphatase family.

The enzyme catalyses an acyl phosphate + H2O = a carboxylate + phosphate + H(+). The protein is Acylphosphatase-2 (Acyp2) of Mus musculus (Mouse).